We begin with the raw amino-acid sequence, 397 residues long: MDALATSINQFALELSKKLAESAQGKNIFFSAWSISASLAMVHLGAKGNTAAQMAQVLQFKRDQGVKSDPESEKKRKTEFNLSNSGEIHCNFQTLISEILKPNNDYILKTANAAYSEKTYPFHNKYLEDVKTYFGAEPQSVNFVEASDQIRKEINSWVERQTEGKIQNLLSDDSVGSTTRMVLVNALYFKGIWEHQFLVQNTTEKPFRINETTSKPVQMMFMKEKLQIFHIEKPQALGLQLYYKSCDLSLFILLPEDINGLEQLEKAITYEKLSKWTSADMMEVYDVQLHLPKFKLEESYDLKSTLSSMGMSDAFSESEADFSGMSSARNLFLSNVFHKAFVEIDEQGTEAAAGSGSEISFRIKVPSIEFNANHPFLFFIRHNKTNNILFYGRFCSP.

Positions lysine 74–lysine 77 match the Nuclear localization signal motif.

The protein belongs to the serpin family. Ov-serpin subfamily.

It localises to the nucleus. The protein resides in the cytoplasm. Functionally, protease inhibitor that may play a role in the regulation of protease activities during hematopoiesis and apoptosis induced by TNF. May regulate protease activities in the cytoplasm and in the nucleus. The chain is Serpin B10 (SERPINB10) from Plecturocebus moloch (Dusky titi monkey).